Reading from the N-terminus, the 89-residue chain is Large ribosomal subunit protein bL27 (89 aa).

The segment at 1 to 21 (MAHKKGASSSRNGRDSNAQRL) is disordered. The segment covering 7–19 (ASSSRNGRDSNAQ) has biased composition (polar residues).

Belongs to the bacterial ribosomal protein bL27 family.

The protein is Large ribosomal subunit protein bL27 of Frankia alni (strain DSM 45986 / CECT 9034 / ACN14a).